Reading from the N-terminus, the 461-residue chain is GTPase Der (461 aa).

EngA-type G domains follow at residues 9-171 (KTIA…NLNK) and 200-371 (IQVG…ECFS). Residues 15–22 (GQPNVGKS), 62–66 (DTGGM), 123–126 (NKID), 206–213 (GRVNVGKS), 253–257 (DTAGI), and 317–320 (NKWD) each bind GTP. The KH-like domain occupies 372–456 (KRIPTSLLNS…PLILNAKDKK (85 aa)).

Belongs to the TRAFAC class TrmE-Era-EngA-EngB-Septin-like GTPase superfamily. EngA (Der) GTPase family. Associates with the 50S ribosomal subunit.

GTPase that plays an essential role in the late steps of ribosome biogenesis. The polypeptide is GTPase Der (Helicobacter pylori (strain HPAG1)).